A 53-amino-acid chain; its full sequence is UPF0337 protein LJ_0034.1 (53 aa).

The interval 27–53 (AREVEGKAQQAKGKVKSKATEVKEDLE) is disordered. Residues 44–53 (KATEVKEDLE) show a composition bias toward basic and acidic residues.

The protein belongs to the UPF0337 (CsbD) family.

This chain is UPF0337 protein LJ_0034.1, found in Lactobacillus johnsonii (strain CNCM I-12250 / La1 / NCC 533).